An 84-amino-acid polypeptide reads, in one-letter code: Putative membrane protein insertion efficiency factor (84 aa).

This sequence belongs to the UPF0161 family.

Its subcellular location is the cell inner membrane. Its function is as follows. Could be involved in insertion of integral membrane proteins into the membrane. The sequence is that of Putative membrane protein insertion efficiency factor from Shewanella halifaxensis (strain HAW-EB4).